We begin with the raw amino-acid sequence, 368 residues long: CST complex subunit STN1 (368 aa).

The tract at residues 1–185 (MQPGSSRCEE…KIYDQPFRSS (185 aa)) is interaction with CTC1. Residues 57–155 (VDVLGTVVGV…EIHATAYYKV (99 aa)) constitute a DNA-binding region (OB). Winged helix-turn-helix (wHTH) stretches follow at residues 191 to 295 (EALS…YVTR) and 296 to 368 (EDKD…YTAF).

This sequence belongs to the STN1 family. In terms of assembly, component of the CST complex, composed of TEN1/C17orf106, CTC1/C17orf68 and STN1; in the complex interacts directly with TEN1 and CTC1. Interacts with ACD/TPP1, POT1 and POLA1.

The protein resides in the nucleus. It is found in the chromosome. The protein localises to the telomere. Functionally, component of the CST complex proposed to act as a specialized replication factor promoting DNA replication under conditions of replication stress or natural replication barriers such as the telomere duplex. The CST complex binds single-stranded DNA with high affinity in a sequence-independent manner, while isolated subunits bind DNA with low affinity by themselves. Initially the CST complex has been proposed to protect telomeres from DNA degradation. However, the CST complex has been shown to be involved in several aspects of telomere replication. The CST complex inhibits telomerase and is involved in telomere length homeostasis; it is proposed to bind to newly telomerase-synthesized 3' overhangs and to terminate telomerase action implicating the association with the ACD:POT1 complex thus interfering with its telomerase stimulation activity. The CST complex is also proposed to be involved in fill-in synthesis of the telomeric C-strand probably implicating recruitment and activation of DNA polymerase alpha. The CST complex facilitates recovery from many forms of exogenous DNA damage; seems to be involved in the re-initiation of DNA replication at repaired forks and/or dormant origins. Required for efficicient replication of the duplex region of the telomere. Promotes efficient replication of lagging-strand telomeres. Promotes general replication start following replication-fork stalling implicating new origin firing. May be in involved in C-strand fill-in during late S/G2 phase independent of its role in telomere duplex replication. The protein is CST complex subunit STN1 of Macaca fascicularis (Crab-eating macaque).